We begin with the raw amino-acid sequence, 122 residues long: Large ribosomal subunit protein uL14 (122 aa).

Belongs to the universal ribosomal protein uL14 family. Part of the 50S ribosomal subunit. Forms a cluster with proteins L3 and L19. In the 70S ribosome, L14 and L19 interact and together make contacts with the 16S rRNA in bridges B5 and B8.

In terms of biological role, binds to 23S rRNA. Forms part of two intersubunit bridges in the 70S ribosome. The chain is Large ribosomal subunit protein uL14 from Flavobacterium johnsoniae (strain ATCC 17061 / DSM 2064 / JCM 8514 / BCRC 14874 / CCUG 350202 / NBRC 14942 / NCIMB 11054 / UW101) (Cytophaga johnsonae).